Consider the following 200-residue polypeptide: Pyrrolidone-carboxylate peptidase (200 aa).

Active-site residues include glutamate 78, cysteine 141, and histidine 165.

Belongs to the peptidase C15 family. As to quaternary structure, homotetramer.

The protein resides in the cytoplasm. It carries out the reaction Release of an N-terminal pyroglutamyl group from a polypeptide, the second amino acid generally not being Pro.. Removes 5-oxoproline from various penultimate amino acid residues except L-proline. In Lactobacillus helveticus (strain DPC 4571), this protein is Pyrrolidone-carboxylate peptidase.